A 93-amino-acid polypeptide reads, in one-letter code: YcgL domain-containing protein Shew_2183 (93 aa).

Residues 1–85 (MICAVYKSRL…PPVNLLEEYK (85 aa)) enclose the YcgL domain.

The polypeptide is YcgL domain-containing protein Shew_2183 (Shewanella loihica (strain ATCC BAA-1088 / PV-4)).